The following is a 749-amino-acid chain: Poly(U)-binding-splicing factor rnp-6 (749 aa).

RRM domains follow at residues 102-176 (SRIY…LKVN) and 207-285 (FRVY…KCVT). 2 disordered regions span residues 323 to 388 (AGSS…PDVV) and 457 to 480 (IEEE…KMKR). A compositionally biased stretch (low complexity) spans 330 to 354 (PSESGGSRAASPAPRAQSPATPSSS). The 82-residue stretch at 658-739 (NVIVLRNMVT…NTVKAEAYDQ (82 aa)) folds into the RRM 3; atypical domain.

Belongs to the RRM half pint family.

It is found in the nucleus. Functionally, DNA- and RNA-binding protein, involved in several nuclear processes such as pre-mRNA splicing, apoptosis and transcription regulation. Ensures the correct splicing of genes involved in immunity to promote longevity in response to infection by pathogenic bacteria such as S.aureus. The sequence is that of Poly(U)-binding-splicing factor rnp-6 from Caenorhabditis elegans.